The sequence spans 179 residues: uncharacterized protein (179 aa).

An N-terminal signal peptide occupies residues 1-27 (MNKSMIQSGGYVLLAGLILAMSSTLFA). An intrachain disulfide couples Cys43 to Cys83.

Belongs to the fimbrial protein family.

It is found in the fimbrium. Its function is as follows. Part of the yfcOPQRSUV fimbrial operon. Could contribute to adhesion to various surfaces in specific environmental niches. Increases adhesion to eukaryotic T24 bladder epithelial cells in the absence of fim genes. This is an uncharacterized protein from Escherichia coli (strain K12).